Here is a 260-residue protein sequence, read N- to C-terminus: Ribonuclease HII (260 aa).

In terms of domain architecture, RNase H type-2 spans 75–260 (ELIAGVDEVG…FEPIKSIIKK (186 aa)). A divalent metal cation contacts are provided by aspartate 81, glutamate 82, and aspartate 173.

This sequence belongs to the RNase HII family. It depends on Mn(2+) as a cofactor. Mg(2+) serves as cofactor.

Its subcellular location is the cytoplasm. The catalysed reaction is Endonucleolytic cleavage to 5'-phosphomonoester.. In terms of biological role, endonuclease that specifically degrades the RNA of RNA-DNA hybrids. In Streptococcus thermophilus (strain CNRZ 1066), this protein is Ribonuclease HII.